The sequence spans 501 residues: Putative zinc metalloprotease TM_0890 (501 aa).

His17 contributes to the Zn(2+) binding site. Glu18 is a catalytic residue. Residue His21 participates in Zn(2+) binding. Helical transmembrane passes span 93-115, 401-420, 427-449, and 474-496; these read FLIT…LPIT, VQTG…SAAS, VLTV…LPAL, and IIHF…LDIG. One can recognise a PDZ domain in the interval 96–180; the sequence is TLAGPLFSIL…LVIIRNGEKK (85 aa).

It belongs to the peptidase M50B family. The cofactor is Zn(2+).

The protein localises to the cell inner membrane. This chain is Putative zinc metalloprotease TM_0890, found in Thermotoga maritima (strain ATCC 43589 / DSM 3109 / JCM 10099 / NBRC 100826 / MSB8).